Consider the following 267-residue polypeptide: Tryptophan synthase alpha chain (267 aa).

Catalysis depends on proton acceptor residues glutamate 49 and aspartate 60.

This sequence belongs to the TrpA family. Tetramer of two alpha and two beta chains.

It catalyses the reaction (1S,2R)-1-C-(indol-3-yl)glycerol 3-phosphate + L-serine = D-glyceraldehyde 3-phosphate + L-tryptophan + H2O. The protein operates within amino-acid biosynthesis; L-tryptophan biosynthesis; L-tryptophan from chorismate: step 5/5. The alpha subunit is responsible for the aldol cleavage of indoleglycerol phosphate to indole and glyceraldehyde 3-phosphate. This chain is Tryptophan synthase alpha chain, found in Citrifermentans bemidjiense (strain ATCC BAA-1014 / DSM 16622 / JCM 12645 / Bem) (Geobacter bemidjiensis).